A 182-amino-acid polypeptide reads, in one-letter code: Large ribosomal subunit protein bL25 (182 aa).

Belongs to the bacterial ribosomal protein bL25 family. CTC subfamily. Part of the 50S ribosomal subunit; part of the 5S rRNA/L5/L18/L25 subcomplex. Contacts the 5S rRNA. Binds to the 5S rRNA independently of L5 and L18.

Functionally, this is one of the proteins that binds to the 5S RNA in the ribosome where it forms part of the central protuberance. In Borreliella burgdorferi (strain ATCC 35210 / DSM 4680 / CIP 102532 / B31) (Borrelia burgdorferi), this protein is Large ribosomal subunit protein bL25.